Here is a 359-residue protein sequence, read N- to C-terminus: DNA replication and repair protein RecF (359 aa).

30 to 37 provides a ligand contact to ATP; the sequence is GQNAQGKT.

The protein belongs to the RecF family.

The protein resides in the cytoplasm. In terms of biological role, the RecF protein is involved in DNA metabolism; it is required for DNA replication and normal SOS inducibility. RecF binds preferentially to single-stranded, linear DNA. It also seems to bind ATP. The sequence is that of DNA replication and repair protein RecF from Lactococcus lactis subsp. cremoris (strain MG1363).